The primary structure comprises 178 residues: 5,6,7,8-tetrahydromethanopterin hydro-lyase (178 aa).

Residue histidine 33 is the Proton donor of the active site. Aspartate 35, leucine 64, lysine 82, threonine 84, and glutamine 99 together coordinate substrate.

This sequence belongs to the formaldehyde-activating enzyme family.

It localises to the cytoplasm. The enzyme catalyses 5,6,7,8-tetrahydromethanopterin + formaldehyde = 5,10-methylenetetrahydromethanopterin + H2O. Functionally, catalyzes the condensation of formaldehyde with tetrahydromethanopterin (H(4)MPT) to 5,10-methylenetetrahydromethanopterin. This is 5,6,7,8-tetrahydromethanopterin hydro-lyase (faeA) from Methanosarcina barkeri (strain Fusaro / DSM 804).